The primary structure comprises 454 residues: Bifunctional protein GlmU (454 aa).

Residues 1–231 (MSRPTVSLIV…EAETLGVNTR (231 aa)) are pyrophosphorylase. Residues 11–14 (LAAG), K25, Q78, 83–84 (GT), 106–108 (YGD), G143, E157, N172, and N229 each bind UDP-N-acetyl-alpha-D-glucosamine. Mg(2+) is bound at residue D108. Residue N229 coordinates Mg(2+). Positions 232–252 (AQLAAAEAEFQRRARAAALED) are linker. Positions 253 to 454 (GVTLTAPDTV…ARDASKKGTN (202 aa)) are N-acetyltransferase. Residues R318 and K336 each coordinate UDP-N-acetyl-alpha-D-glucosamine. Residue H348 is the Proton acceptor of the active site. Residues Y351 and N362 each contribute to the UDP-N-acetyl-alpha-D-glucosamine site. Residues A365, 371-372 (NY), S390, S408, and R425 each bind acetyl-CoA.

In the N-terminal section; belongs to the N-acetylglucosamine-1-phosphate uridyltransferase family. The protein in the C-terminal section; belongs to the transferase hexapeptide repeat family. Homotrimer. The cofactor is Mg(2+).

Its subcellular location is the cytoplasm. The enzyme catalyses alpha-D-glucosamine 1-phosphate + acetyl-CoA = N-acetyl-alpha-D-glucosamine 1-phosphate + CoA + H(+). It carries out the reaction N-acetyl-alpha-D-glucosamine 1-phosphate + UTP + H(+) = UDP-N-acetyl-alpha-D-glucosamine + diphosphate. The protein operates within nucleotide-sugar biosynthesis; UDP-N-acetyl-alpha-D-glucosamine biosynthesis; N-acetyl-alpha-D-glucosamine 1-phosphate from alpha-D-glucosamine 6-phosphate (route II): step 2/2. It participates in nucleotide-sugar biosynthesis; UDP-N-acetyl-alpha-D-glucosamine biosynthesis; UDP-N-acetyl-alpha-D-glucosamine from N-acetyl-alpha-D-glucosamine 1-phosphate: step 1/1. It functions in the pathway bacterial outer membrane biogenesis; LPS lipid A biosynthesis. In terms of biological role, catalyzes the last two sequential reactions in the de novo biosynthetic pathway for UDP-N-acetylglucosamine (UDP-GlcNAc). The C-terminal domain catalyzes the transfer of acetyl group from acetyl coenzyme A to glucosamine-1-phosphate (GlcN-1-P) to produce N-acetylglucosamine-1-phosphate (GlcNAc-1-P), which is converted into UDP-GlcNAc by the transfer of uridine 5-monophosphate (from uridine 5-triphosphate), a reaction catalyzed by the N-terminal domain. The polypeptide is Bifunctional protein GlmU (Cereibacter sphaeroides (strain ATCC 17025 / ATH 2.4.3) (Rhodobacter sphaeroides)).